Consider the following 253-residue polypeptide: Tryptophan synthase alpha chain (253 aa).

Residues Glu47 and Asp58 each act as proton acceptor in the active site.

This sequence belongs to the TrpA family. Tetramer of two alpha and two beta chains.

The catalysed reaction is (1S,2R)-1-C-(indol-3-yl)glycerol 3-phosphate + L-serine = D-glyceraldehyde 3-phosphate + L-tryptophan + H2O. It functions in the pathway amino-acid biosynthesis; L-tryptophan biosynthesis; L-tryptophan from chorismate: step 5/5. Functionally, the alpha subunit is responsible for the aldol cleavage of indoleglycerol phosphate to indole and glyceraldehyde 3-phosphate. The chain is Tryptophan synthase alpha chain from Desulforapulum autotrophicum (strain ATCC 43914 / DSM 3382 / VKM B-1955 / HRM2) (Desulfobacterium autotrophicum).